The sequence spans 337 residues: Gastrula zinc finger protein XlCGF26.1 (337 aa).

12 consecutive C2H2-type zinc fingers follow at residues 6–28 (FDCT…YKIH), 34–56 (FICA…SKIH), 62–84 (FPCT…NKIH), 90–112 (FICA…SKIH), 118–140 (FPCT…NKIH), 146–168 (FICA…SKIH), 174–196 (FPCT…NKIH), 202–224 (FTCT…VKIH), 230–252 (FTCT…NKIH), 258–280 (FTCT…FKIH), 286–309 (FSCT…KRTH), and 315–337 (FTCT…NKIH).

Belongs to the krueppel C2H2-type zinc-finger protein family.

Its subcellular location is the nucleus. In terms of biological role, may be involved in transcriptional regulation. The chain is Gastrula zinc finger protein XlCGF26.1 from Xenopus laevis (African clawed frog).